The chain runs to 334 residues: MPNVTLIGIDLGKNSFHIHCQEKHGNTLLRKRFSRIQLTQFLATCPPCIVAMESCAGAHFMARHISQLGHQVKLISPQFVRPFVKSNKNDFIDAEAICEATSRPSMHFVTPRTEDQQAMSALHRVRDALVRERVKATNQMHAFLLEFGISMPRGIAVIKRLATVPEEHELPPYLVRLLTRLHQHYGYLCEQIEEIERELKNHLADDETAQRLLTIPGIGTITASLLATKLGDGKNYLSSRDFGASTGLVPRQYSTGGKSTLMGISKRGDKNLRRLLVQCARVYMQRLEYQSGRLAEWVNGQLTRHHSNVVACALANKLARIAWVVTTQGTVFSK.

It belongs to the transposase IS1111A/IS1328/IS1533 family.

Functionally, required for the transposition of the insertion element. The polypeptide is Transposase for insertion sequence element IS1328 (Yersinia enterocolitica).